A 92-amino-acid polypeptide reads, in one-letter code: Small ribosomal subunit protein uS19 (92 aa).

It belongs to the universal ribosomal protein uS19 family.

Functionally, protein S19 forms a complex with S13 that binds strongly to the 16S ribosomal RNA. The polypeptide is Small ribosomal subunit protein uS19 (Rickettsia canadensis (strain McKiel)).